Consider the following 424-residue polypeptide: MSCVSSISSKRSRCEGFDDDFIHTPLKKCSKGYHEWSLSITTPATTPTGKLDYKRKTKSLDDDLISSPVKFGTDANVLNAEFQELSLQKLLVSLSTSDDSKSNPIFHIPELLHRIFNFLDHESLYRCSKVNPVWAAVASSIINKDLVIQQSSISGDLKIVELDQKVHPKSLTFYKLKQHRNFIENQLPRIRFTRLNSLNFYISPVLPAIFDDVTISNNLTKLTIAGNKKINDEELISLILGLPNLIDLDLRACSQISDISIVSIVTHCPKLQSINLGRHENSHLITDLSIMALSELEHLTTVGFSGCDKISDVSIWQLYSKHSTTLVRLSINGCTQISDSSISDIVAKHGFPNLKVLDIRNCQLVRFKNLIQYRDWRHKYLMKPIHIHISDSMKKEFELQEQQLYKEFRTRIVNDLNRWVNEAT.

The protein belongs to the AMN1 family.

The protein localises to the cytoplasm. Its subcellular location is the nucleus. Negative regulator of the mitotic exit network (MEN), required for multiple cell cycle checkpoints. Required for daughter cell separation and chromosome stability. Involved in copper sensitivity. This is Antagonist of mitotic exit network protein 1 (AMN1) from Kluyveromyces lactis (strain ATCC 8585 / CBS 2359 / DSM 70799 / NBRC 1267 / NRRL Y-1140 / WM37) (Yeast).